The chain runs to 516 residues: 2-isopropylmalate synthase (516 aa).

Positions 8-270 (IYIFDTTLRD…YTGIKTESIY (263 aa)) constitute a Pyruvate carboxyltransferase domain. Mn(2+) is bound by residues Asp-17, His-205, His-207, and Asn-241. Residues 394-516 (KLIYLNVVSG…DAGKIKSEYE (123 aa)) form a regulatory domain region.

The protein belongs to the alpha-IPM synthase/homocitrate synthase family. LeuA type 1 subfamily. In terms of assembly, homodimer. Requires Mn(2+) as cofactor.

The protein localises to the cytoplasm. The enzyme catalyses 3-methyl-2-oxobutanoate + acetyl-CoA + H2O = (2S)-2-isopropylmalate + CoA + H(+). It participates in amino-acid biosynthesis; L-leucine biosynthesis; L-leucine from 3-methyl-2-oxobutanoate: step 1/4. Catalyzes the condensation of the acetyl group of acetyl-CoA with 3-methyl-2-oxobutanoate (2-ketoisovalerate) to form 3-carboxy-3-hydroxy-4-methylpentanoate (2-isopropylmalate). This Syntrophus aciditrophicus (strain SB) protein is 2-isopropylmalate synthase.